The primary structure comprises 641 residues: tRNA 5-methylaminomethyl-2-thiouridine biosynthesis bifunctional protein MnmC (641 aa).

The tRNA (mnm(5)s(2)U34)-methyltransferase stretch occupies residues 1–219; that stretch reads MTVSKILKQI…PYPICSAAVT (219 aa). The tract at residues 232-641 is FAD-dependent cmnm(5)s(2)U34 oxidoreductase; the sequence is IGGGVASACL…GKALEVGVEV (410 aa).

In the N-terminal section; belongs to the methyltransferase superfamily. tRNA (mnm(5)s(2)U34)-methyltransferase family. It in the C-terminal section; belongs to the DAO family. It depends on FAD as a cofactor.

It localises to the cytoplasm. The enzyme catalyses 5-aminomethyl-2-thiouridine(34) in tRNA + S-adenosyl-L-methionine = 5-methylaminomethyl-2-thiouridine(34) in tRNA + S-adenosyl-L-homocysteine + H(+). Functionally, catalyzes the last two steps in the biosynthesis of 5-methylaminomethyl-2-thiouridine (mnm(5)s(2)U) at the wobble position (U34) in tRNA. Catalyzes the FAD-dependent demodification of cmnm(5)s(2)U34 to nm(5)s(2)U34, followed by the transfer of a methyl group from S-adenosyl-L-methionine to nm(5)s(2)U34, to form mnm(5)s(2)U34. In Shewanella pealeana (strain ATCC 700345 / ANG-SQ1), this protein is tRNA 5-methylaminomethyl-2-thiouridine biosynthesis bifunctional protein MnmC.